Here is a 284-residue protein sequence, read N- to C-terminus: Small ribosomal subunit protein uS5 (284 aa).

A compositionally biased stretch (basic and acidic residues) spans 1–10; sequence MMADEKKTPE. Positions 1–105 are disordered; that stretch reads MMADEKKTPE…DNRRGGRREE (105 aa). Low complexity predominate over residues 14–23; that stretch reads ETATPAVAVE. Positions 24 to 43 are enriched in basic and acidic residues; sequence DALKAEPTETLEAQKAKAEA. The segment covering 44 to 67 has biased composition (low complexity); sequence ETPAVAETPSEAAANQSAAQGAEG. The span at 68–105 shows a compositional bias: basic and acidic residues; sequence QPRERGGHDRGGRGGRGGNDRGRGRGGRDNRRGGRREE. The region spanning 110–173 is the S5 DRBM domain; the sequence is IIEKLVHINR…AAARKKMIRV (64 aa). Positions 246-284 are disordered; that stretch reads DQTSPKSVAQRRGKKVADLLGRGGASEAEAEADAAAIAE.

Belongs to the universal ribosomal protein uS5 family. In terms of assembly, part of the 30S ribosomal subunit. Contacts proteins S4 and S8.

Its function is as follows. With S4 and S12 plays an important role in translational accuracy. In terms of biological role, located at the back of the 30S subunit body where it stabilizes the conformation of the head with respect to the body. The chain is Small ribosomal subunit protein uS5 from Erythrobacter litoralis (strain HTCC2594).